Reading from the N-terminus, the 187-residue chain is Ras-like protein rasD (187 aa).

A GTP-binding site is contributed by 10–17 (GGGGVGKS). The Effector region signature appears at 32 to 40 (YDPTIEDSY). GTP is bound by residues 57–61 (DTAGQ) and 116–119 (NKAD). Cysteine methyl ester is present on Cys184. Cys184 is lipidated: S-geranylgeranyl cysteine. The propeptide at 185-187 (LIL) is removed in mature form.

The protein belongs to the small GTPase superfamily. Ras family.

It is found in the cell membrane. It catalyses the reaction GTP + H2O = GDP + phosphate + H(+). Alternates between an inactive form bound to GDP and an active form bound to GTP. Activated by a guanine nucleotide-exchange factor (GEF) and inactivated by a GTPase-activating protein (GAP). Ras proteins bind GDP/GTP and possess intrinsic GTPase activity. This is Ras-like protein rasD (rasD) from Dictyostelium discoideum (Social amoeba).